The following is a 229-amino-acid chain: MTSEMESSLEVSFSSSCAVSGASGCLPPARSRIFKIIVIGDSNVGKTCLTYRFCAGRFPDRTEATIGVDFRERAVDIDGERIKIQLWDTAGQERFRKSMVQHYYRNVHAVVFVYDMTNMASFHSLPAWIEECKQHLLANDIPRILVGNKCDLRSAIQVPTDLAQKFADTHSMPLFETSAKNPNDNDHVEAIFMTLAHKLKSHKPLMLSQLPDNRISLKPETKPAVTCWC.

Residues N43, V44, G45, K46, T47, C48, T62, and T65 each coordinate GTP. T47 provides a ligand contact to Mg(2+). The Switch 1 motif lies at 56-68 (GRFPDRTEATIGV). Mg(2+) is bound by residues T65 and D88. A Switch 2 motif is present at residues 89–108 (TAGQERFRKSMVQHYYRNVH). G91, N148, K149, D151, A179, and K180 together coordinate GTP. S-geranylgeranyl cysteine attachment occurs at residues C227 and C229. A Cysteine methyl ester modification is found at C229.

The protein belongs to the small GTPase superfamily. Rab family. As to quaternary structure, interacts (GTP- and GDP-bound forms) with ATG16L1; the complex consists of a tetramer where two RAB33B molecules bind independently one molecule of the ATG16L1 homodimer; the interaction promotes ATG12-ATG5-ATG16L1 complex recruitment to phagophores. Interacts with ATG16L2; however interaction is approximately hundred times lower than for ATG16L1. Interacts with RIC1 (via C-terminus domain); the interaction is direct with a preference for RAB33B-GTP. Interacts with RGP1. Mg(2+) serves as cofactor. In terms of processing, prenylated. In terms of tissue distribution, ubiquitous.

The protein resides in the golgi apparatus membrane. It localises to the golgi apparatus. The protein localises to the cis-Golgi network. It is found in the preautophagosomal structure membrane. The enzyme catalyses GTP + H2O = GDP + phosphate + H(+). With respect to regulation, regulated by guanine nucleotide exchange factors (GEFs) which promote the exchange of bound GDP for free GTP. Regulated by GTPase activating proteins (GAPs) such as SGSM2 which increase the GTP hydrolysis activity. Inhibited by GDP dissociation inhibitors (GDIs). In terms of biological role, the small GTPases Rab are key regulators of intracellular membrane trafficking, from the formation of transport vesicles to their fusion with membranes. Rabs cycle between an inactive GDP-bound form and an active GTP-bound form that is able to recruit to membranes different sets of downstream effectors directly responsible for vesicle formation, movement, tethering and fusion. RAB33B acts, in coordination with RAB6A, to regulate intra-Golgi retrograde trafficking. Participates in autophagosome formation by recruiting the ATG12-ATG5-ATG16L1 complex to phagophores, probably in a nucleotide-independent manner. The chain is Ras-related protein Rab-33B from Mus musculus (Mouse).